The following is a 255-amino-acid chain: 1-(5-phosphoribosyl)-5-[(5-phosphoribosylamino)methylideneamino] imidazole-4-carboxamide isomerase (255 aa).

Aspartate 8 functions as the Proton acceptor in the catalytic mechanism. Aspartate 129 serves as the catalytic Proton donor.

It belongs to the HisA/HisF family.

Its subcellular location is the cytoplasm. The catalysed reaction is 1-(5-phospho-beta-D-ribosyl)-5-[(5-phospho-beta-D-ribosylamino)methylideneamino]imidazole-4-carboxamide = 5-[(5-phospho-1-deoxy-D-ribulos-1-ylimino)methylamino]-1-(5-phospho-beta-D-ribosyl)imidazole-4-carboxamide. Its pathway is amino-acid biosynthesis; L-histidine biosynthesis; L-histidine from 5-phospho-alpha-D-ribose 1-diphosphate: step 4/9. The sequence is that of 1-(5-phosphoribosyl)-5-[(5-phosphoribosylamino)methylideneamino] imidazole-4-carboxamide isomerase from Prochlorococcus marinus (strain MIT 9312).